A 501-amino-acid chain; its full sequence is Ribulose bisphosphate carboxylase large chain (501 aa).

Positions 141 and 191 each coordinate substrate. Residue K193 is the Proton acceptor of the active site. K195 is a substrate binding site. Mg(2+) contacts are provided by K219, D221, and E222. At K219 the chain carries N6-carboxylysine. The Proton acceptor role is filled by H311. Residues R312, H344, and S396 each coordinate substrate.

Belongs to the RuBisCO large chain family. Type I subfamily. As to quaternary structure, heterohexadecamer of 8 large chains and 8 small chains. It depends on Mg(2+) as a cofactor.

The enzyme catalyses 2 (2R)-3-phosphoglycerate + 2 H(+) = D-ribulose 1,5-bisphosphate + CO2 + H2O. It catalyses the reaction D-ribulose 1,5-bisphosphate + O2 = 2-phosphoglycolate + (2R)-3-phosphoglycerate + 2 H(+). Its function is as follows. RuBisCO catalyzes two reactions: the carboxylation of D-ribulose 1,5-bisphosphate, the primary event in carbon dioxide fixation, as well as the oxidative fragmentation of the pentose substrate. Both reactions occur simultaneously and in competition at the same active site. The sequence is that of Ribulose bisphosphate carboxylase large chain from Paraburkholderia phymatum (strain DSM 17167 / CIP 108236 / LMG 21445 / STM815) (Burkholderia phymatum).